A 424-amino-acid chain; its full sequence is MKFDVIIIGGGLAGLACGIRLAEQGKYCAIVSAGQNALHFSSGSLDLLAKLPDGRAVSQPLSALSALAELAPEHPYSKMRNITQLDELVQEAEALLRRCGLDIVGSSAENHLRLTPLGSCRPTWLSLADIPVAPLNGPLPWQRVAVIGIEGFLDFQPQMVASALQDQGIDATADYLHLPALDRLRDNPSEFRAVNIARILDLPENRQPLADELSRLSSTAEMILLPACIGLDKSAPLDALRAVVGKPIQLLPTLPPSLLGMRLHQALRHRFQQLGGLVMPGDAVLRAELVDNRITGLYSRNHGDIPLRAAQMVLASGSFFSNGLVATFDKVYEPILDLDILSLPHRADWSHSNLFAPQPYLQFGVNTDNHLRPLRGGVALENLHAIGAVLGGYDPLQQGCGAGVSLTSAVFVAEQIISEMAVTL.

This sequence belongs to the anaerobic G-3-P dehydrogenase subunit B family. In terms of assembly, composed of a catalytic GlpA/B dimer and of membrane bound GlpC. FMN serves as cofactor.

The enzyme catalyses a quinone + sn-glycerol 3-phosphate = dihydroxyacetone phosphate + a quinol. It participates in polyol metabolism; glycerol degradation via glycerol kinase pathway; glycerone phosphate from sn-glycerol 3-phosphate (anaerobic route): step 1/1. Functionally, conversion of glycerol 3-phosphate to dihydroxyacetone. Uses fumarate or nitrate as electron acceptor. The chain is Anaerobic glycerol-3-phosphate dehydrogenase subunit B from Yersinia pseudotuberculosis serotype I (strain IP32953).